The primary structure comprises 2040 residues: Apolipoprotein(a) (2040 aa).

The N-terminal stretch at 1-19 (MEHKEVVLLLLLFLKSAAP) is a signal peptide. 10 consecutive Kringle domains span residues 27-105 (DCYH…LTQC), 141-219 (ECYH…LTQC), 255-333 (ECYH…LTQC), 369-447 (ECYH…LTQC), 483-561 (ECYH…LTQC), 597-675 (ECYH…LTQC), 711-789 (ECYH…LTQC), 825-903 (ECYH…LTQC), 939-1017 (ECYH…LTRC), and 1053-1131 (DCYY…LTQC). Cystine bridges form between Cys-28/Cys-105, Cys-49/Cys-88, Cys-77/Cys-100, Cys-142/Cys-219, Cys-163/Cys-202, Cys-191/Cys-214, Cys-256/Cys-333, Cys-277/Cys-316, Cys-305/Cys-328, Cys-370/Cys-447, Cys-391/Cys-430, Cys-419/Cys-442, Cys-484/Cys-561, Cys-505/Cys-544, Cys-533/Cys-556, Cys-598/Cys-675, Cys-619/Cys-658, Cys-647/Cys-670, Cys-712/Cys-789, Cys-733/Cys-772, Cys-761/Cys-784, Cys-826/Cys-903, Cys-847/Cys-886, Cys-875/Cys-898, Cys-940/Cys-1017, Cys-961/Cys-1000, Cys-989/Cys-1012, Cys-1054/Cys-1131, Cys-1075/Cys-1114, and Cys-1103/Cys-1126. Asn-61 carries an N-linked (GlcNAc...) asparagine glycan. Asn-101 is a glycosylation site (N-linked (GlcNAc...) asparagine). An N-linked (GlcNAc...) asparagine glycan is attached at Asn-215. N-linked (GlcNAc...) asparagine glycosylation is present at Asn-329. N-linked (GlcNAc...) asparagine glycosylation is present at Asn-443. An N-linked (GlcNAc...) asparagine glycan is attached at Asn-557. An N-linked (GlcNAc...) asparagine glycan is attached at Asn-671. An N-linked (GlcNAc...) asparagine glycan is attached at Asn-785. Asn-899 carries an N-linked (GlcNAc...) asparagine glycan. Residue Asn-1013 is glycosylated (N-linked (GlcNAc...) asparagine). Residue Asn-1127 is glycosylated (N-linked (GlcNAc...) asparagine). The tract at residues 1147-1166 (DPSTEASSEEAPTEQSPGVQ) is disordered. 2 Kringle domains span residues 1167–1245 (DCYH…LTQC) and 1273–1351 (DCYH…LTQC). 6 disulfides stabilise this stretch: Cys-1168–Cys-1245, Cys-1189–Cys-1228, Cys-1217–Cys-1240, Cys-1274–Cys-1351, Cys-1295–Cys-1334, and Cys-1323–Cys-1346. Asn-1241 is a glycosylation site (N-linked (GlcNAc...) asparagine). N-linked (GlcNAc...) asparagine glycans are attached at residues Asn-1347 and Asn-1381. A disordered region spans residues 1365–1388 (VPVPSTELPSEEAPTENSTGVQDC). In terms of domain architecture, Kringle 13 spans 1387–1465 (DCYRGDGQSY…RWEYCNLTRC (79 aa)). 3 disulfide bridges follow: Cys-1388/Cys-1465, Cys-1409/Cys-1448, and Cys-1437/Cys-1460. Asn-1461 carries an N-linked (GlcNAc...) asparagine glycan. The segment at 1476-1497 (PTVAPVPSTEAPSEQAPPEKSP) is disordered. 3 consecutive Kringle domains span residues 1501–1579 (DCYH…LTQC), 1615–1693 (QCYH…LTRC), and 1719–1799 (DCMF…IPLC). Intrachain disulfides connect Cys-1502–Cys-1579, Cys-1523–Cys-1562, Cys-1551–Cys-1574, Cys-1616–Cys-1693, Cys-1637–Cys-1676, Cys-1665–Cys-1688, Cys-1720–Cys-1799, Cys-1741–Cys-1782, Cys-1770–Cys-1794, and Cys-1846–Cys-1862. Residue Asn-1575 is glycosylated (N-linked (GlcNAc...) asparagine). Asn-1689 is a glycosylation site (N-linked (GlcNAc...) asparagine). A Peptidase S1 domain is found at 1820–2038 (IVGGCVAHPH…FVTWIEGMMR (219 aa)). Residues His-1861 and Asp-1904 each act as charge relay system in the active site. 3 cysteine pairs are disulfide-bonded: Cys-1938-Cys-1996, Cys-1968-Cys-1975, and Cys-1986-Cys-2014. The active-site Charge relay system is the Ser-1990.

This sequence belongs to the peptidase S1 family. Plasminogen subfamily. Disulfide-linked to apo-B100. Binds to fibronectin and decorin. Post-translationally, N- and O-glycosylated. The N-glycans are complex biantennary structures present in either a mono- or disialylated state. The O-glycans are mostly (80%) represented by the monosialylated core type I structure, NeuNAcalpha2-3Galbeta1-3GalNAc, with smaller amounts of disialylated and non-sialylated O-glycans also detected.

Functionally, apo(a) is the main constituent of lipoprotein(a) (Lp(a)). It has serine proteinase activity and is able of autoproteolysis. Inhibits tissue-type plasminogen activator 1. Lp(a) may be a ligand for megalin/Gp 330. The polypeptide is Apolipoprotein(a) (LPA) (Homo sapiens (Human)).